Here is a 323-residue protein sequence, read N- to C-terminus: MASITNILAPVENELDLLTKNLKKLVGSGHPILSAASEHLFSASGKRPRPAIVLLISKATMENEIITSRHRRLAEITEIIHTASLVHDDILDESDVRRGIPTVHSDFGTKIAILAGDFLFAQSSWYLANLESLEVVKLISKVITDFAEGEIRRGLNQFKVDLTLEEYLEKSFYKTASLLAASSKAAALLSHVDLTVANDLYNYGRHLGLAFQIVDDILDFTSSTEELGKPSCSDLKKGNLTAPVLFALEQNSELIPLIQRQFSEPKDFEYTLQIVEETKAIEKTRELAMEHAQVAIQCLENLPPSSSKEALKLITKYVLERLY.

Lys46, Arg49, and His81 together coordinate isopentenyl diphosphate. The Mg(2+) site is built by Asp88 and Asp92. Arg97 lines the an all-trans-polyprenyl diphosphate pocket. Arg98 provides a ligand contact to isopentenyl diphosphate. Residues Lys174, Thr175, and Gln212 each contribute to the an all-trans-polyprenyl diphosphate site.

Belongs to the FPP/GGPP synthase family. Mg(2+) is required as a cofactor.

Its subcellular location is the plastid. It is found in the cyanelle. Its function is as follows. Possible role in synthesis of the nonaprenyl side chain of plastoquinone or in synthesis of other prenyl chains such as undekaprenyl pyrophosphate. The sequence is that of Prenyl transferase (preA) from Cyanophora paradoxa.